The following is a 511-amino-acid chain: Lysine--tRNA ligase (511 aa).

Mg(2+) is bound by residues Glu421 and Glu428.

The protein belongs to the class-II aminoacyl-tRNA synthetase family. Homodimer. It depends on Mg(2+) as a cofactor.

The protein localises to the cytoplasm. It carries out the reaction tRNA(Lys) + L-lysine + ATP = L-lysyl-tRNA(Lys) + AMP + diphosphate. This chain is Lysine--tRNA ligase, found in Aeromonas hydrophila subsp. hydrophila (strain ATCC 7966 / DSM 30187 / BCRC 13018 / CCUG 14551 / JCM 1027 / KCTC 2358 / NCIMB 9240 / NCTC 8049).